A 137-amino-acid polypeptide reads, in one-letter code: Large ribosomal subunit protein eL28 (137 aa).

Serine 2 carries the post-translational modification N-acetylserine. Residues lysine 58 and lysine 65 each participate in a glycyl lysine isopeptide (Lys-Gly) (interchain with G-Cter in SUMO2) cross-link. Serine 115 carries the phosphoserine modification.

It belongs to the eukaryotic ribosomal protein eL28 family. Component of the large ribosomal subunit.

The protein localises to the cytoplasm. Its function is as follows. Component of the large ribosomal subunit. The ribosome is a large ribonucleoprotein complex responsible for the synthesis of proteins in the cell. This chain is Large ribosomal subunit protein eL28 (Rpl28), found in Rattus norvegicus (Rat).